The sequence spans 1070 residues: DNA-directed RNA polymerase subunit beta (1070 aa).

The protein belongs to the RNA polymerase beta chain family. In plastids the minimal PEP RNA polymerase catalytic core is composed of four subunits: alpha, beta, beta', and beta''. When a (nuclear-encoded) sigma factor is associated with the core the holoenzyme is formed, which can initiate transcription.

The protein localises to the plastid. It is found in the chloroplast. The enzyme catalyses RNA(n) + a ribonucleoside 5'-triphosphate = RNA(n+1) + diphosphate. Its function is as follows. DNA-dependent RNA polymerase catalyzes the transcription of DNA into RNA using the four ribonucleoside triphosphates as substrates. In Phalaenopsis aphrodite subsp. formosana (Moth orchid), this protein is DNA-directed RNA polymerase subunit beta.